Reading from the N-terminus, the 328-residue chain is MEKMINDIAHRIIAGGSITEAEAIQLTQVQGTEVYDLFRAATRVKEHFVGNEVHLCSIINAKSGRCAENCAFCAQSAHHKTDAPVYPLVQEEEMLASARMAETNGSACFGIITSGTTVNGPELEQILTALRRIRKETTILPSCSLGIIDEETARKLKEAGMDTYHHNLETAASFFPQICTTHDYQDDVNTVRAVKKAGVKVCCGGIFGLGESAAQRVEMALTLKDLDVDSVPMNFLNPIEGTRLEGAANITAQECLKTIAIYRLILPGKRITVCGGREKNLRDLQSWIFFAGANGTMIGNYLTTLGRNVDTDLTMFSDLGLKTVMCAH.

One can recognise a Radical SAM core domain in the interval 48 to 277 (FVGNEVHLCS…GKRITVCGGR (230 aa)). Cys-66, Cys-70, and Cys-73 together coordinate [4Fe-4S] cluster. Residues Ser-142 and Cys-202 each contribute to the [2Fe-2S] cluster site.

The protein belongs to the radical SAM superfamily. Biotin synthase family. Homodimer. It depends on [4Fe-4S] cluster as a cofactor. The cofactor is [2Fe-2S] cluster.

The catalysed reaction is (4R,5S)-dethiobiotin + (sulfur carrier)-SH + 2 reduced [2Fe-2S]-[ferredoxin] + 2 S-adenosyl-L-methionine = (sulfur carrier)-H + biotin + 2 5'-deoxyadenosine + 2 L-methionine + 2 oxidized [2Fe-2S]-[ferredoxin]. It functions in the pathway cofactor biosynthesis; biotin biosynthesis; biotin from 7,8-diaminononanoate: step 2/2. In terms of biological role, catalyzes the conversion of dethiobiotin (DTB) to biotin by the insertion of a sulfur atom into dethiobiotin via a radical-based mechanism. The chain is Biotin synthase from Citrifermentans bemidjiense (strain ATCC BAA-1014 / DSM 16622 / JCM 12645 / Bem) (Geobacter bemidjiensis).